Consider the following 157-residue polypeptide: MNPLRRKRLLIILAVLGGVGLALTLALSALKENINLFYTPSQIANGQAPLGTRIRAGGMVEKGSLQRSTDSLDVRFVVTDFNKSVTIAYRGILPDLFREGQGIVALGKLDAQGVVVADEVLAKHDEKYMPPEVSKALRESGQATPAPASMPARQADR.

Topologically, residues 1–8 are cytoplasmic; the sequence is MNPLRRKR. A helical; Signal-anchor for type II membrane protein transmembrane segment spans residues 9-29; sequence LLIILAVLGGVGLALTLALSA. The Periplasmic portion of the chain corresponds to 30-157; sequence LKENINLFYT…ASMPARQADR (128 aa). Residues His-124 and Tyr-128 each coordinate heme. The segment at 132–157 is disordered; that stretch reads EVSKALRESGQATPAPASMPARQADR.

It belongs to the CcmE/CycJ family.

It is found in the cell inner membrane. Functionally, heme chaperone required for the biogenesis of c-type cytochromes. Transiently binds heme delivered by CcmC and transfers the heme to apo-cytochromes in a process facilitated by CcmF and CcmH. In Pseudomonas syringae pv. tomato (strain ATCC BAA-871 / DC3000), this protein is Cytochrome c-type biogenesis protein CcmE.